A 309-amino-acid chain; its full sequence is Homoserine kinase (309 aa).

91–101 is an ATP binding site; sequence PIGSGLGSSAC.

Belongs to the GHMP kinase family. Homoserine kinase subfamily.

The protein resides in the cytoplasm. It catalyses the reaction L-homoserine + ATP = O-phospho-L-homoserine + ADP + H(+). It participates in amino-acid biosynthesis; L-threonine biosynthesis; L-threonine from L-aspartate: step 4/5. Functionally, catalyzes the ATP-dependent phosphorylation of L-homoserine to L-homoserine phosphate. The polypeptide is Homoserine kinase (Buchnera aphidicola subsp. Acyrthosiphon pisum (strain APS) (Acyrthosiphon pisum symbiotic bacterium)).